Consider the following 145-residue polypeptide: Brain and acute leukemia cytoplasmic protein (145 aa).

A lipid anchor (N-myristoyl glycine) is attached at Gly-2. Residue Cys-3 is the site of S-palmitoyl cysteine attachment. The tract at residues 3 to 35 (CGGSRADAIEPRYYESWTRETESTWLTYTDSDA) is interaction with CAMK2A. Disordered regions lie at residues 36–56 (LPSAAATDSGPEAGGLHAGVL) and 87–109 (CPNSQNLSSGPLTQKQNGLWATE). Residues 87-105 (CPNSQNLSSGPLTQKQNGL) are compositionally biased toward polar residues.

As to quaternary structure, interacts with CAMK2A. Post-translationally, palmitoylation and myristoylation target the protein to the lipid rafts. At the mRNA level, predominantly expressed in the brain. At the protein level, mainly expressed in muscle tissues. In skeletal muscles, expressed in cranial and facial muscles, muscles of the neck, back, thoracic wall, and thigh. Also found in the contractile myoepithelial cell layer of salivary glands. In smooth muscles, expressed in the gastric wall, uterus, urinary bladder, as well as in the muscular lining around seminiferous tubules, prostatic ducts, epididymis, vas deferens, walls of small blood vessels in the dermis, and fascial layers between muscle fibers, brain, and around the spinal cord. Strongly expressed in myocardium. High expression levels are observed in placental spongiotrophoblast and adjacent myometrium. Also expressed in bone marrow hematopoietic cells. In the mature thymus, expressed in rare scattered cells. Weakly expressed in the brain neuropil, particularly near the hippocampus, and spinal cord white matter. Not detected in skin keratinocytes or lung (at protein level).

Its subcellular location is the cytoplasm. The protein localises to the synapse. It is found in the synaptosome. The protein resides in the membrane raft. It localises to the postsynaptic density. May play a synaptic role at the postsynaptic lipid rafts possibly through interaction with CAMK2A. The protein is Brain and acute leukemia cytoplasmic protein (Baalc) of Mus musculus (Mouse).